A 492-amino-acid polypeptide reads, in one-letter code: 5-taurinomethyluridine-[tRNA] synthase subunit GTPB3, mitochondrial (492 aa).

Residues 1 to 20 constitute a mitochondrion transit peptide; the sequence is MWRGLWTLAAQAARGPRRLC. Positions 52, 112, and 152 each coordinate 5,10-methylenetetrahydrofolate. One can recognise a TrmE-type G domain in the interval 249–416; that stretch reads GVHVVVTGPP…LLEALRKELA (168 aa). Residues 256–263, 282–286, 303–306, 374–377, and 397–399 each bind GTP; these read GPPNAGKS, GTTRD, DTAG, NKSD, and SCL. A K(+)-binding site is contributed by Asn-259. Mg(2+) contacts are provided by Ser-263 and Thr-284. A 5,10-methylenetetrahydrofolate-binding site is contributed by Lys-492.

Belongs to the TRAFAC class TrmE-Era-EngA-EngB-Septin-like GTPase superfamily. TrmE GTPase family. In terms of assembly, homodimer; forms a dimer in the presence of potassium. Interacts with MTO1; forms the GTPBP3-MTO1 complex composed of homodimers of GTPBP3 and MTO1. As to quaternary structure, homodimer, forms homodimer in vivo. K(+) serves as cofactor. Ubiquitously expressed.

It is found in the mitochondrion. Its subcellular location is the cytoplasm. The enzyme catalyses GTP + H2O = GDP + phosphate + H(+). GTPase component of the GTPBP3-MTO1 complex that catalyzes the 5-taurinomethyluridine (taum(5)U) modification at the 34th wobble position (U34) of mitochondrial tRNAs (mt-tRNAs), which plays a role in mt-tRNA decoding and mitochondrial translation. Taum(5)U formation on mammalian mt-tRNA requires the presence of both GTPBP3-mediated GTPase activity and MTO1 catalytic activity. This is 5-taurinomethyluridine-[tRNA] synthase subunit GTPB3, mitochondrial from Homo sapiens (Human).